A 307-amino-acid chain; its full sequence is Coproporphyrin III ferrochelatase (307 aa).

Fe-coproporphyrin III-binding positions include tyrosine 12, arginine 29, 45–46 (RY), serine 53, and tyrosine 124. Fe(2+) is bound by residues histidine 181 and glutamate 263.

This sequence belongs to the ferrochelatase family.

It is found in the cytoplasm. The enzyme catalyses Fe-coproporphyrin III + 2 H(+) = coproporphyrin III + Fe(2+). Its pathway is porphyrin-containing compound metabolism; protoheme biosynthesis. In terms of biological role, involved in coproporphyrin-dependent heme b biosynthesis. Catalyzes the insertion of ferrous iron into coproporphyrin III to form Fe-coproporphyrin III. The polypeptide is Coproporphyrin III ferrochelatase (Staphylococcus epidermidis (strain ATCC 12228 / FDA PCI 1200)).